The chain runs to 102 residues: ATP-dependent Clp protease adapter protein ClpS (102 aa).

This sequence belongs to the ClpS family. As to quaternary structure, binds to the N-terminal domain of the chaperone ClpA.

In terms of biological role, involved in the modulation of the specificity of the ClpAP-mediated ATP-dependent protein degradation. The chain is ATP-dependent Clp protease adapter protein ClpS from Shewanella halifaxensis (strain HAW-EB4).